The chain runs to 144 residues: Transcription antitermination protein NusB (144 aa).

Belongs to the NusB family.

Its function is as follows. Involved in transcription antitermination. Required for transcription of ribosomal RNA (rRNA) genes. Binds specifically to the boxA antiterminator sequence of the ribosomal RNA (rrn) operons. The chain is Transcription antitermination protein NusB from Dictyoglomus thermophilum (strain ATCC 35947 / DSM 3960 / H-6-12).